A 56-amino-acid chain; its full sequence is 4Fe-4S ferredoxin FdxA (56 aa).

4Fe-4S ferredoxin-type domains are found at residues 1–28 (MAYV…SSGD) and 29–56 (DRYV…PVQA). [4Fe-4S] cluster is bound by residues C9, C12, C15, C19, C38, C41, C44, and C48.

[4Fe-4S] cluster serves as cofactor.

In terms of biological role, ferredoxins are iron-sulfur proteins that transfer electrons in a wide variety of metabolic reactions. The sequence is that of 4Fe-4S ferredoxin FdxA from Gottschalkia acidurici (strain ATCC 7906 / DSM 604 / BCRC 14475 / CIP 104303 / KCTC 5404 / NCIMB 10678 / 9a) (Clostridium acidurici).